The following is a 133-amino-acid chain: Small ribosomal subunit protein uS8 (133 aa).

Belongs to the universal ribosomal protein uS8 family. As to quaternary structure, part of the 30S ribosomal subunit.

One of the primary rRNA binding proteins, it binds directly to 16S rRNA central domain where it helps coordinate assembly of the platform of the 30S subunit. The polypeptide is Small ribosomal subunit protein uS8 (Sulfolobus acidocaldarius (strain ATCC 33909 / DSM 639 / JCM 8929 / NBRC 15157 / NCIMB 11770)).